The following is a 345-amino-acid chain: S-adenosylmethionine:tRNA ribosyltransferase-isomerase (345 aa).

The protein belongs to the QueA family. In terms of assembly, monomer.

It localises to the cytoplasm. It catalyses the reaction 7-aminomethyl-7-carbaguanosine(34) in tRNA + S-adenosyl-L-methionine = epoxyqueuosine(34) in tRNA + adenine + L-methionine + 2 H(+). It participates in tRNA modification; tRNA-queuosine biosynthesis. Transfers and isomerizes the ribose moiety from AdoMet to the 7-aminomethyl group of 7-deazaguanine (preQ1-tRNA) to give epoxyqueuosine (oQ-tRNA). This is S-adenosylmethionine:tRNA ribosyltransferase-isomerase from Shewanella halifaxensis (strain HAW-EB4).